The following is a 258-amino-acid chain: MLNSVPLVIAQHSTQDDTSLLNSIGNKWGFPVVSHSEKPAEGFYLQIQNGVLGLADASEKKVLPVEVDFASPASLYRKQHGGGRKEPIVKAIGLKGNEGWHVVDATPGLGRDAFVLVSVGCKVTMIERSPIVAALLEDGIRRLALSFPELAAKMSLQHGNSAEVMQYFTGENVNAIYLDPMFPHKKKSALVKKEMRLFQQLLGHDPDADALLPPALKLATHRVVVKRPNSADVLAGEKPSMAIESKKHRFDVYLCQKP.

S-adenosyl-L-methionine is bound by residues 111 to 112, 127 to 128, and D179; these read RD and ER.

This sequence belongs to the methyltransferase superfamily. RsmJ family.

It localises to the cytoplasm. The catalysed reaction is guanosine(1516) in 16S rRNA + S-adenosyl-L-methionine = N(2)-methylguanosine(1516) in 16S rRNA + S-adenosyl-L-homocysteine + H(+). Its function is as follows. Specifically methylates the guanosine in position 1516 of 16S rRNA. The polypeptide is Ribosomal RNA small subunit methyltransferase J (Alteromonas mediterranea (strain DSM 17117 / CIP 110805 / LMG 28347 / Deep ecotype)).